The primary structure comprises 432 residues: uncharacterized protein (432 aa).

The protein to M.jannaschii MJ0977.

This is an uncharacterized protein from Methanocaldococcus jannaschii (strain ATCC 43067 / DSM 2661 / JAL-1 / JCM 10045 / NBRC 100440) (Methanococcus jannaschii).